The primary structure comprises 496 residues: Cytochrome P450 4ae1 (496 aa).

Cys-443 is a heme binding site.

The protein belongs to the cytochrome P450 family. Heme serves as cofactor.

It is found in the endoplasmic reticulum membrane. The protein localises to the microsome membrane. May be involved in the metabolism of insect hormones and in the breakdown of synthetic insecticides. This is Cytochrome P450 4ae1 (Cyp4ae1) from Drosophila melanogaster (Fruit fly).